A 251-amino-acid chain; its full sequence is Ubiquinone/menaquinone biosynthesis C-methyltransferase UbiE (251 aa).

Residues threonine 74, aspartate 95, and 123-124 contribute to the S-adenosyl-L-methionine site; that span reads NA.

Belongs to the class I-like SAM-binding methyltransferase superfamily. MenG/UbiE family.

It carries out the reaction a 2-demethylmenaquinol + S-adenosyl-L-methionine = a menaquinol + S-adenosyl-L-homocysteine + H(+). The enzyme catalyses a 2-methoxy-6-(all-trans-polyprenyl)benzene-1,4-diol + S-adenosyl-L-methionine = a 5-methoxy-2-methyl-3-(all-trans-polyprenyl)benzene-1,4-diol + S-adenosyl-L-homocysteine + H(+). The protein operates within quinol/quinone metabolism; menaquinone biosynthesis; menaquinol from 1,4-dihydroxy-2-naphthoate: step 2/2. Its pathway is cofactor biosynthesis; ubiquinone biosynthesis. In terms of biological role, methyltransferase required for the conversion of demethylmenaquinol (DMKH2) to menaquinol (MKH2) and the conversion of 2-polyprenyl-6-methoxy-1,4-benzoquinol (DDMQH2) to 2-polyprenyl-3-methyl-6-methoxy-1,4-benzoquinol (DMQH2). In Shewanella oneidensis (strain ATCC 700550 / JCM 31522 / CIP 106686 / LMG 19005 / NCIMB 14063 / MR-1), this protein is Ubiquinone/menaquinone biosynthesis C-methyltransferase UbiE.